The sequence spans 648 residues: Biosynthetic arginine decarboxylase (648 aa).

Lysine 109 is modified (N6-(pyridoxal phosphate)lysine). 291–301 (IDVGGGLGIDF) contributes to the substrate binding site.

The protein belongs to the Orn/Lys/Arg decarboxylase class-II family. SpeA subfamily. Mg(2+) serves as cofactor. Requires pyridoxal 5'-phosphate as cofactor.

The enzyme catalyses L-arginine + H(+) = agmatine + CO2. Its pathway is amine and polyamine biosynthesis; agmatine biosynthesis; agmatine from L-arginine: step 1/1. Functionally, catalyzes the biosynthesis of agmatine from arginine. This is Biosynthetic arginine decarboxylase from Prochlorococcus marinus (strain MIT 9312).